Reading from the N-terminus, the 349-residue chain is Homeobox protein engrailed (349 aa).

4 disordered regions span residues 26–53, 146–210, 228–252, and 327–349; these read DGPS…SPLS, GKET…PLPP, PSSG…EKRP, and STIP…ARIE. 2 stretches are compositionally biased toward basic and acidic residues: residues 173 to 188 and 242 to 252; these read QMKK…RTES and DKAITPDEKRP. Residues 249-308 constitute a DNA-binding region (homeobox); sequence EKRPRTAFTAEQLSRLKHEFNENRYLTERRRQDLARELGLHENQIKIWFQNNRAKLKKSS.

The protein belongs to the engrailed homeobox family.

Its subcellular location is the nucleus. In Artemia franciscana (Brine shrimp), this protein is Homeobox protein engrailed.